A 1045-amino-acid chain; its full sequence is DNA polymerase (1045 aa).

The disordered stretch occupies residues 331–355 (IKENEESDSESDNDDEEDKKENDGA). Over residues 335 to 348 (EESDSESDNDDEED) the composition is skewed to acidic residues.

The protein belongs to the DNA polymerase type-B family.

It carries out the reaction DNA(n) + a 2'-deoxyribonucleoside 5'-triphosphate = DNA(n+1) + diphosphate. This chain is DNA polymerase (dpo), found in Phaeocystis pouchetii (PpV01).